We begin with the raw amino-acid sequence, 191 residues long: Protein GrpE (191 aa).

It belongs to the GrpE family. In terms of assembly, homodimer.

The protein resides in the cytoplasm. Functionally, participates actively in the response to hyperosmotic and heat shock by preventing the aggregation of stress-denatured proteins, in association with DnaK and GrpE. It is the nucleotide exchange factor for DnaK and may function as a thermosensor. Unfolded proteins bind initially to DnaJ; upon interaction with the DnaJ-bound protein, DnaK hydrolyzes its bound ATP, resulting in the formation of a stable complex. GrpE releases ADP from DnaK; ATP binding to DnaK triggers the release of the substrate protein, thus completing the reaction cycle. Several rounds of ATP-dependent interactions between DnaJ, DnaK and GrpE are required for fully efficient folding. The polypeptide is Protein GrpE (Listeria monocytogenes serotype 4a (strain HCC23)).